The chain runs to 262 residues: Zinc finger protein ehn-3 (262 aa).

C2H2-type zinc fingers lie at residues 2–24 (EKCDICHQKFSNKTNLNRHKVMH), 30–52 (FECQFCRRPFFRNDRMKEHMMTH), 59–84 (FECPITACNSKFNSFTSLQFHVDSEH), and 92–115 (AKCKSCIKWFNSSHRLLLHFHTAH). The interval 179–204 (SVKSAKELSPTPSTEIETPEEEELDG) is disordered. Over residues 185–194 (ELSPTPSTEI) the composition is skewed to low complexity. A compositionally biased stretch (acidic residues) spans 195-204 (ETPEEEELDG). 2 consecutive C2H2-type zinc fingers follow at residues 208–230 (WYCDYCKIRFDDKVMWYLHSGLH) and 236–260 (FKCSLCGSLCDGKYDFAAHLVYANH).

This sequence belongs to the krueppel C2H2-type zinc-finger protein family.

Its subcellular location is the nucleus. In terms of biological role, together with the zinc finger protein ztf-16, plays a role in gonadogenesis, specifically in somatic gonad precursor cell development. This is possibly by regulating tra-1 gene expression. Functionally, required for proper gonadal primordium assembly and somatic gonad precursor cell morphology. The sequence is that of Zinc finger protein ehn-3 from Caenorhabditis elegans.